The primary structure comprises 301 residues: Ornithine carbamoyltransferase (301 aa).

Residues 53-56 (STRT), Gln80, Arg104, and 131-134 (HPCQ) each bind carbamoyl phosphate. L-ornithine-binding positions include Asn162, Asp221, and 225–226 (SI). Residues 260-261 (CL) and Arg288 contribute to the carbamoyl phosphate site.

The protein belongs to the aspartate/ornithine carbamoyltransferase superfamily. OTCase family.

Its subcellular location is the cytoplasm. The enzyme catalyses carbamoyl phosphate + L-ornithine = L-citrulline + phosphate + H(+). The protein operates within amino-acid biosynthesis; L-arginine biosynthesis; L-arginine from L-ornithine and carbamoyl phosphate: step 1/3. Reversibly catalyzes the transfer of the carbamoyl group from carbamoyl phosphate (CP) to the N(epsilon) atom of ornithine (ORN) to produce L-citrulline. This Cenarchaeum symbiosum (strain A) protein is Ornithine carbamoyltransferase.